The following is a 388-amino-acid chain: Flavin-dependent monooxygenase (388 aa).

Residues 26 to 27 and 45 to 48 each bind FAD; these read PV and YERD. Residue Arg54 participates in NADPH binding. Positions 61, 117, and 139 each coordinate FAD. The substrate site is built by Gln192 and Arg213. FAD is bound by residues Asp311 and 321-324; that span reads GQGV.

Belongs to the aromatic-ring hydroxylase family. TetX subfamily. Monomer. The cofactor is FAD.

It localises to the cytoplasm. It carries out the reaction a tetracycline + NADPH + O2 + H(+) = an 11a-hydroxytetracycline + NADP(+) + H2O. It catalyses the reaction tetracycline + NADPH + O2 + H(+) = 11a-hydroxytetracycline + NADP(+) + H2O. The enzyme catalyses tigecycline + NADPH + O2 + H(+) = 11a-hydroxytigecycline + NADP(+) + H2O. The catalysed reaction is oxytetracycline + NADPH + O2 + H(+) = 11a-hydroxy-oxytetracycline + NADP(+) + H2O. Its activity is regulated as follows. Anhydrotetracycline, a poor substrate, prevents tetracycline degradation in vitro. Functionally, an FAD-requiring monooxygenase active on tetracycline antibiotic derivatives, which leads to their inactivation. Hydroxylates carbon 11a of oxytetracycline and tigecycline. Acts on many tetracycline analogs (chlorotetracycline, demeclocycline, doxycycline, minocycline, oxytetracyclinee), probably by monooxygenization. Tigecycline, a new generation tetracycline antibiotic, is rendered less effective against E.coli by this monooxygenation, is much weaker at inhibiting translation in vitro and binds Mg(2+) considerably less well. Expression in E.coli BW25113 reduces its growth rate about 5%. The reaction probably proceeds by FAD reduction by NADPH and, second, hydroxylation of antibiotic in a ping-pong mechanism. Degrades chlortetracycline, probably by monooxygenation. Slowly oxidizes anhydrotetracycline, the final substrate in tetracycline biosynthesis. The sequence is that of Flavin-dependent monooxygenase from Bacteroides thetaiotaomicron.